The chain runs to 63 residues: Juvenile hormone esterase, isoform B (63 aa).

The N-linked (GlcNAc...) asparagine glycan is linked to Asn-20.

This sequence belongs to the type-B carboxylesterase/lipase family. Fat body, the site of their biosynthesis, and the hemolymph where it is secreted.

It carries out the reaction juvenile hormone I + H2O = juvenile hormone I carboxylate + methanol + H(+). It catalyses the reaction juvenile hormone III + H2O = juvenile hormone III carboxylate + methanol + H(+). In terms of biological role, JH esterase plays a crucial role in the decrease of JH activity in lepidopteran insects, by hydrolyzing the methyl ester of JH. It is also involved in the transport of JH. This chain is Juvenile hormone esterase, isoform B, found in Trichoplusia ni (Cabbage looper).